A 109-amino-acid polypeptide reads, in one-letter code: Large ribosomal subunit protein eL30 (109 aa).

The protein belongs to the eukaryotic ribosomal protein eL30 family.

The chain is Large ribosomal subunit protein eL30 from Methanopyrus kandleri (strain AV19 / DSM 6324 / JCM 9639 / NBRC 100938).